The following is a 367-amino-acid chain: 4-hydroxy-3-methylbut-2-en-1-yl diphosphate synthase (flavodoxin) (367 aa).

4 residues coordinate [4Fe-4S] cluster: Cys265, Cys268, Cys300, and Glu307.

It belongs to the IspG family. [4Fe-4S] cluster is required as a cofactor.

It catalyses the reaction (2E)-4-hydroxy-3-methylbut-2-enyl diphosphate + oxidized [flavodoxin] + H2O + 2 H(+) = 2-C-methyl-D-erythritol 2,4-cyclic diphosphate + reduced [flavodoxin]. The protein operates within isoprenoid biosynthesis; isopentenyl diphosphate biosynthesis via DXP pathway; isopentenyl diphosphate from 1-deoxy-D-xylulose 5-phosphate: step 5/6. In terms of biological role, converts 2C-methyl-D-erythritol 2,4-cyclodiphosphate (ME-2,4cPP) into 1-hydroxy-2-methyl-2-(E)-butenyl 4-diphosphate. This Bacillus cereus (strain ATCC 10987 / NRS 248) protein is 4-hydroxy-3-methylbut-2-en-1-yl diphosphate synthase (flavodoxin).